A 318-amino-acid polypeptide reads, in one-letter code: Transaldolase (318 aa).

Catalysis depends on Lys132, which acts as the Schiff-base intermediate with substrate.

This sequence belongs to the transaldolase family. Type 1 subfamily. As to quaternary structure, homodimer.

It localises to the cytoplasm. The catalysed reaction is D-sedoheptulose 7-phosphate + D-glyceraldehyde 3-phosphate = D-erythrose 4-phosphate + beta-D-fructose 6-phosphate. It functions in the pathway carbohydrate degradation; pentose phosphate pathway; D-glyceraldehyde 3-phosphate and beta-D-fructose 6-phosphate from D-ribose 5-phosphate and D-xylulose 5-phosphate (non-oxidative stage): step 2/3. Functionally, transaldolase is important for the balance of metabolites in the pentose-phosphate pathway. The polypeptide is Transaldolase (Shewanella sediminis (strain HAW-EB3)).